The primary structure comprises 215 residues: LysM and putative peptidoglycan-binding domain-containing protein 2 (215 aa).

Residues 1-40 (MADSSPALSLREGGPRAPRPSAPSPPPRSRSGSESEEAEL) are disordered. An N-acetylalanine modification is found at Ala2. Phosphoserine occurs at positions 5, 24, 33, and 57. Residues 17-28 (APRPSAPSPPPR) show a composition bias toward pro residues. The 45-residue stretch at 71-115 (VEHRVRAGDTLQGIALKYGVTMEQIKRANKLFTNDCIFLKKTLNI) folds into the LysM domain. Disordered stretches follow at residues 132–175 (DSPE…EEVS) and 193–215 (AAKK…LYHS). Positions 196–205 (KLKEESRDEE) are enriched in basic and acidic residues.

This is LysM and putative peptidoglycan-binding domain-containing protein 2 (LYSMD2) from Homo sapiens (Human).